The following is a 98-amino-acid chain: Toxin ParE1 (98 aa).

It belongs to the RelE toxin family.

Toxic component of a type II toxin-antitoxin (TA) system. Its toxic effect is neutralized by coexpression with cognate antitoxin ParD1. The polypeptide is Toxin ParE1 (parE1) (Mycobacterium tuberculosis (strain CDC 1551 / Oshkosh)).